The chain runs to 305 residues: Nucleotide-binding protein Rxyl_2009 (305 aa).

24-31 (GLSGAGKS) provides a ligand contact to ATP. 75 to 78 (DIRG) serves as a coordination point for GTP.

It belongs to the RapZ-like family.

Displays ATPase and GTPase activities. In Rubrobacter xylanophilus (strain DSM 9941 / JCM 11954 / NBRC 16129 / PRD-1), this protein is Nucleotide-binding protein Rxyl_2009.